The following is a 450-amino-acid chain: Putative zinc metalloprotease PA3649 (450 aa).

A Zn(2+)-binding site is contributed by His-21. The active site involves Glu-22. Zn(2+) is bound at residue His-25. Residues 97-119 (IAIVAAGPIANFLLAILFFWVVA) form a helical membrane-spanning segment. The 93-residue stretch at 199–291 (GWLKGEDNPD…VLDVALELAV (93 aa)) folds into the PDZ domain. A helical transmembrane segment spans residues 425 to 444 (AWGMQIGISLVVGVMLLALV).

Belongs to the peptidase M50B family. Requires Zn(2+) as cofactor.

The protein resides in the cell inner membrane. This Pseudomonas aeruginosa (strain ATCC 15692 / DSM 22644 / CIP 104116 / JCM 14847 / LMG 12228 / 1C / PRS 101 / PAO1) protein is Putative zinc metalloprotease PA3649.